Reading from the N-terminus, the 64-residue chain is Alpha-conotoxin CnIA (64 aa).

A signal peptide spans 1–21; that stretch reads MGMRMMFTVFLLVVLTTTVVS. Residues 22-47 constitute a propeptide that is removed on maturation; the sequence is FPSDSASDGRDDEAKDERSDIYESKR. Disulfide bonds link C51–C56 and C52–C62. At P54 the chain carries 4-hydroxyproline; in CnIK; partial. The residue at position 62 (C62) is a Cysteine amide.

It belongs to the conotoxin A superfamily. Expressed by the venom duct.

Its subcellular location is the secreted. Its function is as follows. Alpha-conotoxins act on postsynaptic membranes, they bind to the nicotinic acetylcholine receptors (nAChR) and thus inhibit them. CnIA and CnIB block muscular nAChR alpha-1/gamma and alpha-1/delta subunits. In Conus consors (Singed cone), this protein is Alpha-conotoxin CnIA.